A 391-amino-acid polypeptide reads, in one-letter code: Cystathionine beta-lyase MetC (391 aa).

The residue at position 196 (Lys-196) is an N6-(pyridoxal phosphate)lysine.

Belongs to the trans-sulfuration enzymes family. In terms of assembly, homotetramer. Pyridoxal 5'-phosphate serves as cofactor.

It carries out the reaction L,L-cystathionine + H2O = L-homocysteine + pyruvate + NH4(+). It catalyses the reaction an S-substituted L-cysteine + H2O = a thiol + pyruvate + NH4(+). It participates in amino-acid biosynthesis; L-methionine biosynthesis via de novo pathway; L-homocysteine from L-cystathionine: step 1/1. Its activity is regulated as follows. Cystathionine beta-lyase activity is inhibited by sweat components such as glycine, serine and ammonium sulfate. Inhibited by cystathionine at a concentration higher than 6 mM. Its function is as follows. Catalyzes the transformation of cystathionine into homocysteine. Can also catalyze, at low levels, the conversion of cystathionine into methionine and the conversion of methionine into methanethiol. This Staphylococcus haemolyticus (strain JCSC1435) protein is Cystathionine beta-lyase MetC.